The primary structure comprises 352 residues: Ion-translocating oxidoreductase complex subunit D (352 aa).

Transmembrane regions (helical) follow at residues 20 to 40 (IMLLVLLAAVPGIAAQLWFFG), 42 to 62 (GTLVQILLASVSALLAEALVL), 78 to 109 (ALLTGLLLAVSIPPLAPWWMVVLGTVFAVIIA), 123 to 143 (PAMIGYVVLLISFPVQMTSWL), and 148 to 168 (IAVNIPGFIDAIQVIFSGHTA). Position 187 is an FMN phosphoryl threonine (threonine 187). 5 consecutive transmembrane segments (helical) span residues 214–234 (ILAGAGWQWVNLAWLAGGVWL), 242–262 (WHIPLSFLVTLALCATLGWLF), 267–287 (LAAPQIHLLSGATMLGAFFIL), 301–321 (LIFGALAGLLVWLIRSFGGYP), and 322–342 (DGVAFAVLLANITVPLIDYYT).

This sequence belongs to the NqrB/RnfD family. In terms of assembly, the complex is composed of six subunits: RsxA, RsxB, RsxC, RsxD, RsxE and RsxG. FMN is required as a cofactor.

The protein localises to the cell inner membrane. Its function is as follows. Part of a membrane-bound complex that couples electron transfer with translocation of ions across the membrane. Required to maintain the reduced state of SoxR. The chain is Ion-translocating oxidoreductase complex subunit D from Escherichia coli O157:H7.